Consider the following 93-residue polypeptide: Small ribosomal subunit protein mS33 (93 aa).

This sequence belongs to the mitochondrion-specific ribosomal protein mS33 family. Component of the mitochondrial small ribosomal subunit (mt-SSU). Mature yeast 74S mitochondrial ribosomes consist of a small (37S) and a large (54S) subunit. The 37S small subunit contains a 15S ribosomal RNA (15S mt-rRNA) and at least 32 different proteins. The 54S large subunit contains a 21S rRNA (21S mt-rRNA) and at least 45 different proteins.

The protein resides in the mitochondrion. Functionally, component of the mitochondrial ribosome (mitoribosome), a dedicated translation machinery responsible for the synthesis of mitochondrial genome-encoded proteins, including at least some of the essential transmembrane subunits of the mitochondrial respiratory chain. The mitoribosomes are attached to the mitochondrial inner membrane and translation products are cotranslationally integrated into the membrane. This Schizosaccharomyces pombe (strain 972 / ATCC 24843) (Fission yeast) protein is Small ribosomal subunit protein mS33 (rsm27).